A 504-amino-acid chain; its full sequence is ATP synthase subunit alpha (504 aa).

170–177 (GDRQTGKT) is an ATP binding site.

The protein belongs to the ATPase alpha/beta chains family. F-type ATPases have 2 components, CF(1) - the catalytic core - and CF(0) - the membrane proton channel. CF(1) has five subunits: alpha(3), beta(3), gamma(1), delta(1), epsilon(1). CF(0) has four main subunits: a(1), b(1), b'(1) and c(9-12).

It localises to the cellular thylakoid membrane. It carries out the reaction ATP + H2O + 4 H(+)(in) = ADP + phosphate + 5 H(+)(out). Its function is as follows. Produces ATP from ADP in the presence of a proton gradient across the membrane. The alpha chain is a regulatory subunit. The polypeptide is ATP synthase subunit alpha (Prochlorococcus marinus (strain NATL2A)).